A 231-amino-acid chain; its full sequence is MKRAVVVFSGGQDSTTCLVQALQQYDEVHCVTFDYGQRHRAEIDVARELALKLGARAHKVLDVTLLNELAVSSLTRDSIPVPDYEPEADGIPNTFVPGRNILFLTLAAIYAYQVKAEAVITGVCETDFSGYPDCRDEFVKALNHAVSLGMAKDIRFETPLMWIDKAETWALADYYGKLDLVRNETLTCYNGIKGDGCGHCAACNLRSNGLHHYLADKPTVMAAMKQKTGLK.

8 to 18 (FSGGQDSTTCL) is an ATP binding site. Residues Cys188, Cys197, Cys200, and Cys203 each coordinate Zn(2+).

This sequence belongs to the QueC family. Requires Zn(2+) as cofactor.

The catalysed reaction is 7-carboxy-7-deazaguanine + NH4(+) + ATP = 7-cyano-7-deazaguanine + ADP + phosphate + H2O + H(+). It functions in the pathway purine metabolism; 7-cyano-7-deazaguanine biosynthesis. Its function is as follows. Catalyzes the ATP-dependent conversion of 7-carboxy-7-deazaguanine (CDG) to 7-cyano-7-deazaguanine (preQ(0)). The polypeptide is 7-cyano-7-deazaguanine synthase (Escherichia fergusonii (strain ATCC 35469 / DSM 13698 / CCUG 18766 / IAM 14443 / JCM 21226 / LMG 7866 / NBRC 102419 / NCTC 12128 / CDC 0568-73)).